Consider the following 471-residue polypeptide: GPI mannosyltransferase 2 (471 aa).

8 helical membrane passes run 23 to 43, 135 to 155, 169 to 189, 190 to 210, 227 to 247, 277 to 297, 348 to 368, and 449 to 469; these read LTSF…STLV, VAEA…SALV, LSLV…LSAP, YSES…ALGC, LYTI…SNGL, LAAL…PQAA, YWTL…VILV, and IVMF…SFLP.

This sequence belongs to the PIGV family.

The protein localises to the endoplasmic reticulum membrane. Its pathway is glycolipid biosynthesis; glycosylphosphatidylinositol-anchor biosynthesis. Functionally, mannosyltransferase involved in glycosylphosphatidylinositol-anchor biosynthesis. Transfers the second mannose to the glycosylphosphatidylinositol during GPI precursor assembly. The polypeptide is GPI mannosyltransferase 2 (GPI18) (Chaetomium globosum (strain ATCC 6205 / CBS 148.51 / DSM 1962 / NBRC 6347 / NRRL 1970) (Soil fungus)).